Consider the following 486-residue polypeptide: 6-phosphogluconate dehydrogenase, decarboxylating 2 (486 aa).

Residues 12-17, 35-37, 79-81, and N107 contribute to the NADP(+) site; these read GLAVMG, NRT, and VKA. Substrate is bound by residues N107 and 133–135; that span reads SGG. K188 (proton acceptor) is an active-site residue. A substrate-binding site is contributed by 191–192; sequence HN. The active-site Proton donor is the E195. Y196, K266, R293, R456, and H462 together coordinate substrate. A Microbody targeting signal motif is present at residues 484 to 486; the sequence is SKI.

The protein belongs to the 6-phosphogluconate dehydrogenase family. As to quaternary structure, forms homodimer. Forms heterodimers with PGD1 or PGD3.

The protein localises to the cytoplasm. It localises to the cytosol. Its subcellular location is the peroxisome. The enzyme catalyses 6-phospho-D-gluconate + NADP(+) = D-ribulose 5-phosphate + CO2 + NADPH. The protein operates within carbohydrate degradation; pentose phosphate pathway; D-ribulose 5-phosphate from D-glucose 6-phosphate (oxidative stage): step 3/3. Its function is as follows. Catalyzes the oxidative decarboxylation of 6-phosphogluconate to ribulose 5-phosphate and CO(2), with concomitant reduction of NADP to NADPH. Required for guided growth of the male gametophytes and interaction between the pollen tube and the ovule. This chain is 6-phosphogluconate dehydrogenase, decarboxylating 2, found in Arabidopsis thaliana (Mouse-ear cress).